The sequence spans 64 residues: Large ribosomal subunit protein bL33c (64 aa).

The protein belongs to the bacterial ribosomal protein bL33 family.

The protein localises to the plastid. Its subcellular location is the chloroplast. The protein is Large ribosomal subunit protein bL33c of Phaeodactylum tricornutum (strain CCAP 1055/1).